A 748-amino-acid chain; its full sequence is E3 ubiquitin-protein ligase SMURF2 (748 aa).

Positions 1–119 constitute a C2 domain; sequence MSNPGGRRNG…TGYQRLDLCK (119 aa). Lys-119 participates in a covalent cross-link: Glycyl lysine isopeptide (Lys-Gly) (interchain with G-Cter in ubiquitin). WW domains lie at 157–190, 251–284, and 297–330; these read NDLP…RPTR, PDLP…DPRV, and GPLP…DPRL. The HECT domain maps to 414–748; the sequence is RPKDLWKRLM…IEETCGFAVE (335 aa). Cys-716 functions as the Glycyl thioester intermediate in the catalytic mechanism.

Interacts (via WW domains) with SMAD1. Interacts (via WW domains) with SMAD2 (via PY-motif). Interacts (via WW domains) with SMAD3 (via PY-motif). Interacts with SMAD6. Interacts with SMAD7 (via PY-motif) and TGFBR1; SMAD7 recruits SMURF2 to the TGF-beta receptor and regulates its degradation. Does not interact with SMAD4; SMAD4 lacks a PY-motif. Interacts with AIMP1. Interacts with NDFIP1 and NDFIP2; this interaction activates the E3 ubiquitin-protein ligase. Interacts with TTC3. Auto-ubiquitinated and ubiquitinated in the presence of RNF11 and UBE2D1. Ubiquitinated by the SCF(FBXL15) complex and TTC3, leading to its degradation by the proteasome. 'Lys-48'-linked polyubiquitination mediated by TRAF4 at Lys-119 leads to SMURF2 proteasomal degradation.

The protein resides in the nucleus. Its subcellular location is the cytoplasm. It localises to the cell membrane. The protein localises to the membrane raft. It carries out the reaction S-ubiquitinyl-[E2 ubiquitin-conjugating enzyme]-L-cysteine + [acceptor protein]-L-lysine = [E2 ubiquitin-conjugating enzyme]-L-cysteine + N(6)-ubiquitinyl-[acceptor protein]-L-lysine.. It functions in the pathway protein modification; protein ubiquitination. With respect to regulation, activated by NDFIP1- and NDFIP2-binding. Functionally, E3 ubiquitin-protein ligase which accepts ubiquitin from an E2 ubiquitin-conjugating enzyme in the form of a thioester and then directly transfers the ubiquitin to targeted substrates. Interacts with SMAD7 to trigger SMAD7-mediated transforming growth factor beta/TGF-beta receptor ubiquitin-dependent degradation, thereby down-regulating TGF-beta signaling. In addition, interaction with SMAD7 activates autocatalytic degradation, which is prevented by interaction with AIMP1. Also forms a stable complex with TGF-beta receptor-mediated phosphorylated SMAD1, SMAD2 and SMAD3, and targets SMAD1 and SMAD2 for ubiquitination and proteasome-mediated degradation. SMAD2 may recruit substrates, such as SNON, for ubiquitin-dependent degradation. Negatively regulates TGFB1-induced epithelial-mesenchymal transition and myofibroblast differentiation. The polypeptide is E3 ubiquitin-protein ligase SMURF2 (Mus musculus (Mouse)).